A 375-amino-acid chain; its full sequence is MSESAPTPRRERVIVGMSGGVDSSVSALLLQQQGYQVEGLFMKNWDEDDGTEYCTAREDLADAQAVCDRIGIKLHTANFAAEYWDNVFEHFLAEYKAGRTPNPDILCNREIKFKAFLDYALMLGADLIATGHYVRRRDLDGRTELLKGLDPNKDQSYFLHAVGGEQIARSLFPVGELEKPEVRAIAEKHGLATAKKKDSTGICFIGERRFTDFLKQYLPAQPGDIETTEGKVIGRHSGLMYHTIGQRQGLGIGGLKEAGDDPWYVLGKDLQRNVLLVGQGNDHPLLFSRALLASRIYWVNPVELERPRRLRAKVRYRQSDQDCVLEKTADGYRAVFDEPQRAVTPGQSVVFYDGEVCLGGGVIETAEAWDFGGRP.

ATP contacts are provided by residues 16–23 (GMSGGVDS) and methionine 42. The segment at 102 to 104 (NPD) is interaction with target base in tRNA. The active-site Nucleophile is the cysteine 107. A disulfide bridge links cysteine 107 with cysteine 203. Glycine 131 serves as a coordination point for ATP. The interaction with tRNA stretch occupies residues 153-155 (KDQ). The Cysteine persulfide intermediate role is filled by cysteine 203. The interval 315-316 (RY) is interaction with tRNA.

The protein belongs to the MnmA/TRMU family.

The protein localises to the cytoplasm. It catalyses the reaction S-sulfanyl-L-cysteinyl-[protein] + uridine(34) in tRNA + AH2 + ATP = 2-thiouridine(34) in tRNA + L-cysteinyl-[protein] + A + AMP + diphosphate + H(+). In terms of biological role, catalyzes the 2-thiolation of uridine at the wobble position (U34) of tRNA, leading to the formation of s(2)U34. The sequence is that of tRNA-specific 2-thiouridylase MnmA from Pseudomonas paraeruginosa (strain DSM 24068 / PA7) (Pseudomonas aeruginosa (strain PA7)).